The following is a 105-amino-acid chain: uncharacterized protein (105 aa).

N-acetylserine is present on serine 2.

This is an uncharacterized protein from Saccharomyces cerevisiae (strain ATCC 204508 / S288c) (Baker's yeast).